Here is a 186-residue protein sequence, read N- to C-terminus: Alkyl hydroperoxide reductase AhpD (186 aa).

The active-site Proton donor is Cys132. The cysteines at positions 132 and 135 are disulfide-linked. The active-site Cysteine sulfenic acid (-SOH) intermediate is the Cys135.

The protein belongs to the AhpD family.

It catalyses the reaction N(6)-[(R)-dihydrolipoyl]-L-lysyl-[lipoyl-carrier protein] + a hydroperoxide = N(6)-[(R)-lipoyl]-L-lysyl-[lipoyl-carrier protein] + an alcohol + H2O. Antioxidant protein with alkyl hydroperoxidase activity. Required for the reduction of the AhpC active site cysteine residues and for the regeneration of the AhpC enzyme activity. The polypeptide is Alkyl hydroperoxide reductase AhpD (Anaeromyxobacter sp. (strain K)).